The chain runs to 471 residues: Glutamate--tRNA ligase (471 aa).

Positions 9–19 match the 'HIGH' region motif; sequence PSPTGFLHVGG. Zn(2+) contacts are provided by cysteine 98, cysteine 100, cysteine 125, and aspartate 127. The short motif at 237–241 is the 'KMSKS' region element; the sequence is KLSKR. Lysine 240 serves as a coordination point for ATP.

Belongs to the class-I aminoacyl-tRNA synthetase family. Glutamate--tRNA ligase type 1 subfamily. Monomer. It depends on Zn(2+) as a cofactor.

It localises to the cytoplasm. It carries out the reaction tRNA(Glu) + L-glutamate + ATP = L-glutamyl-tRNA(Glu) + AMP + diphosphate. Functionally, catalyzes the attachment of glutamate to tRNA(Glu) in a two-step reaction: glutamate is first activated by ATP to form Glu-AMP and then transferred to the acceptor end of tRNA(Glu). This is Glutamate--tRNA ligase from Aeromonas salmonicida (strain A449).